Here is a 153-residue protein sequence, read N- to C-terminus: 6,7-dimethyl-8-ribityllumazine synthase (153 aa).

Residues phenylalanine 21, 55-57 (AFE), and 79-81 (TVI) contribute to the 5-amino-6-(D-ribitylamino)uracil site. Position 84–85 (84–85 (AT)) interacts with (2S)-2-hydroxy-3-oxobutyl phosphate. Histidine 87 serves as the catalytic Proton donor. Phenylalanine 112 provides a ligand contact to 5-amino-6-(D-ribitylamino)uracil. Arginine 126 lines the (2S)-2-hydroxy-3-oxobutyl phosphate pocket.

It belongs to the DMRL synthase family. Forms an icosahedral capsid composed of 60 subunits, arranged as a dodecamer of pentamers.

The enzyme catalyses (2S)-2-hydroxy-3-oxobutyl phosphate + 5-amino-6-(D-ribitylamino)uracil = 6,7-dimethyl-8-(1-D-ribityl)lumazine + phosphate + 2 H2O + H(+). It participates in cofactor biosynthesis; riboflavin biosynthesis; riboflavin from 2-hydroxy-3-oxobutyl phosphate and 5-amino-6-(D-ribitylamino)uracil: step 1/2. Its function is as follows. Catalyzes the formation of 6,7-dimethyl-8-ribityllumazine by condensation of 5-amino-6-(D-ribitylamino)uracil with 3,4-dihydroxy-2-butanone 4-phosphate. This is the penultimate step in the biosynthesis of riboflavin. The chain is 6,7-dimethyl-8-ribityllumazine synthase from Bacillus cereus (strain G9842).